The chain runs to 112 residues: MKTLLTILALTLVTLTTWLSTPAFAADIADGAKVFSANCAACHMGGGNVVMANKTLKKEALEQFGMNSADAIMYQVQNGKNAMPAFGGRLSEAQIENVAAYVLDQSSKNWAG.

The first 25 residues, 1–25 (MKTLLTILALTLVTLTTWLSTPAFA), serve as a signal peptide directing secretion. Positions 39, 42, 43, and 83 each coordinate heme c.

The protein belongs to the cytochrome c family. PetJ subfamily. In terms of assembly, monomer. In terms of processing, binds 1 heme c group covalently per subunit.

It localises to the cellular thylakoid lumen. In terms of biological role, functions as an electron carrier between membrane-bound cytochrome b6-f and photosystem I in oxygenic photosynthesis. The chain is Cytochrome c6 from Synechococcus sp. (strain ATCC 27167 / PCC 6312).